Consider the following 87-residue polypeptide: Small ribosomal subunit protein bS20 (87 aa).

The protein belongs to the bacterial ribosomal protein bS20 family.

Functionally, binds directly to 16S ribosomal RNA. This chain is Small ribosomal subunit protein bS20, found in Alkaliphilus metalliredigens (strain QYMF).